The sequence spans 84 residues: NADH dehydrogenase [ubiquinone] 1 alpha subcomplex subunit 3 (84 aa).

At alanine 2 the chain carries N-acetylalanine. A helical membrane pass occupies residues 19–39; it reads LVVSFSVWGLAIIMPMISPYT. Residues 59-84 form a disordered region; it reads DDGNMPDVPSHPQDPLGPSLDWLKNL.

Belongs to the complex I NDUFA3 subunit family. As to quaternary structure, complex I is composed of 45 different subunits.

The protein localises to the mitochondrion inner membrane. Accessory subunit of the mitochondrial membrane respiratory chain NADH dehydrogenase (Complex I), that is believed not to be involved in catalysis. Complex I functions in the transfer of electrons from NADH to the respiratory chain. The immediate electron acceptor for the enzyme is believed to be ubiquinone. The polypeptide is NADH dehydrogenase [ubiquinone] 1 alpha subcomplex subunit 3 (Ndufa3) (Mus musculus (Mouse)).